We begin with the raw amino-acid sequence, 319 residues long: GTPase Era (319 aa).

The Era-type G domain maps to 9–196 (RSGVSLIIGR…MRTLRDLLPE (188 aa)). Residues 17-24 (GRPSSGKS) are G1. GTP is bound at residue 17 to 24 (GRPSSGKS). Residues 43-47 (QTTRN) are G2. Positions 64–67 (DTPG) are G3. GTP is bound by residues 64-68 (DTPGY) and 127-130 (NKVD). Residues 127 to 130 (NKVD) form a G4 region. The segment at 175 to 177 (ISA) is G5. In terms of domain architecture, KH type-2 spans 227–303 (CRDELPHALY…HISLDIRVKV (77 aa)).

The protein belongs to the TRAFAC class TrmE-Era-EngA-EngB-Septin-like GTPase superfamily. Era GTPase family. As to quaternary structure, monomer.

It localises to the cytoplasm. The protein resides in the cell inner membrane. In terms of biological role, an essential GTPase that binds both GDP and GTP, with rapid nucleotide exchange. Plays a role in 16S rRNA processing and 30S ribosomal subunit biogenesis and possibly also in cell cycle regulation and energy metabolism. The sequence is that of GTPase Era from Treponema pallidum (strain Nichols).